The following is a 264-amino-acid chain: 4-oxalocrotonate decarboxylase (264 aa).

Belongs to the hydratase/decarboxylase family.

The enzyme catalyses (3E)-2-oxohex-3-enedioate + H(+) = 2-oxopent-4-enoate + CO2. The protein operates within aromatic compound metabolism; benzoate degradation via hydroxylation. The chain is 4-oxalocrotonate decarboxylase (dmpH) from Pseudomonas sp. (strain CF600).